The following is a 1033-amino-acid chain: Lethal(2) giant larvae protein homolog SRO7 (1033 aa).

The interval 16-45 (SLKGQNSETPIENSKASFKSKNSKTSTISK) is disordered. Residues 18-27 (KGQNSETPIE) are compositionally biased toward polar residues. The segment covering 28–45 (NSKASFKSKNSKTSTISK) has biased composition (low complexity). 14 WD repeats span residues 81–114 (IAAAFDFTQNLLAIATVTGEVHIYGQQQVEVVIK), 121–156 (IKEMRFVKGIYLVVINAKDTVYVLSLYSQKVLTTVF), 161–197 (ITSIDTDASLDWMLIGLQNGSMIVYDIDRDQLSSFKL), 216–249 (SIQWNPRDIGTVLISYEYVTLTYSLVENEIKQSF), 274–309 (VIQSLYHPNSLHIITIHEDNSLVFWDANSGHMIMAR), 333–397 (KISK…MKIF), 405–440 (IVNILPIPRQSPYFAGCHNPGLILLILGNGEIETML), 464–538 (ATTS…FEVN), 552–631 (DKIS…STAV), 638–673 (TSAINNSNIGFVGIAYAAGSLMLIDRRGPAIIYMEN), 685–736 (VTCI…DITN), 745–799 (KIDA…THKG), 804–851 (LAAT…MSEH), and 865–888 (SVLRNGDIAIRVSEFQASLFSTVK). 2 positions are modified to phosphoserine: Ser591 and Ser602. The segment at 953–984 (SFSERSSDDNNANHPEHQYTKPTRKGRNSSYG) is disordered.

This sequence belongs to the WD repeat L(2)GL family. As to quaternary structure, interacts with MYO2 and SEC9.

The protein resides in the cytoplasm. The protein localises to the cell membrane. In terms of biological role, acts as an allosteric regulator of polarized exocytosis by promoting the targeted fusion of vesicles with the plasma membrane. Coordinates the spatial and temporal nature of both Rab-dependent tethering and SNARE-dependent membrane fusion of exocytic vesicles with the plasma membrane. Required for targeting of the sodium pumping ATPase ENA1 to the Cell Surface, thus being involved in maintenance of ion homeostasis in cells exposed to NaCl stress. May be involved in the targeting of the myosin proteins to their intrinsic pathways. Multicopy suppressor of RHO3. May also participate in the maintenance of cell polarity and bud growth. The protein is Lethal(2) giant larvae protein homolog SRO7 (SRO7) of Saccharomyces cerevisiae (strain ATCC 204508 / S288c) (Baker's yeast).